The primary structure comprises 262 residues: uncharacterized protein (262 aa).

The ABC transporter domain occupies 5 to 223; that stretch reads IKVENLTKYF…MAYIEYLDNG (219 aa). 37–44 contacts ATP; that stretch reads GHNGAGKT.

Belongs to the ABC transporter superfamily.

This is an uncharacterized protein from Methanocaldococcus jannaschii (strain ATCC 43067 / DSM 2661 / JAL-1 / JCM 10045 / NBRC 100440) (Methanococcus jannaschii).